We begin with the raw amino-acid sequence, 200 residues long: Large ribosomal subunit protein uL4 (200 aa).

Residues 45–64 (QKTRAEVSGGGIKPWRQKGT) are disordered.

It belongs to the universal ribosomal protein uL4 family. As to quaternary structure, part of the 50S ribosomal subunit.

Its function is as follows. One of the primary rRNA binding proteins, this protein initially binds near the 5'-end of the 23S rRNA. It is important during the early stages of 50S assembly. It makes multiple contacts with different domains of the 23S rRNA in the assembled 50S subunit and ribosome. In terms of biological role, forms part of the polypeptide exit tunnel. The protein is Large ribosomal subunit protein uL4 of Psychrobacter cryohalolentis (strain ATCC BAA-1226 / DSM 17306 / VKM B-2378 / K5).